A 420-amino-acid chain; its full sequence is MATSLGSNTYNRQNWEDADFPILCQTCLGENPYIRMTKEKYGKECKICARPFTVFRWCPGVRMRFKKTEVCQTCSKLKNVCQTCLLDLEYGLPIQVRDAGLSFKDDMPKSDVNKEYYTQNMEREISNSDGTRPVGMLGKATSTSDMLLKLARTTPYYKRNRPHICSFWVKGECKRGEECPYRHEKPTDPDDPLADQNIKDRYYGINDPVADKLLKRASTMPRLDPPEDKTITTLYVGGLGDTITETDLRNHFYQFGEIRTVTVVQRQQCAFIQFATRQAAEVAAEKSFNKLIVNGRRLNVKWGRSQAARGKEKEKDGTTDSGIKLEPVPGLPGALPPPPAAEEEASANYFNLPPSGPPAVVNIALPPPPGIAPPPPPGFGPHLFHPMGPPPPFMRAPGPIHYPSQDPQRMGAHAGKHSSP.

N-acetylalanine is present on A2. 2 positions are modified to phosphoserine: S4 and S102. Glycyl lysine isopeptide (Lys-Gly) (interchain with G-Cter in SUMO2) cross-links involve residues K139 and K149. The segment at 159 to 186 (RNRPHICSFWVKGECKRGEECPYRHEKP) adopts a C3H1-type zinc-finger fold. An N6-acetyllysine modification is found at K212. Residues 232 to 305 (TTLYVGGLGD…RRLNVKWGRS (74 aa)) form the RRM domain. K290 participates in a covalent cross-link: Glycyl lysine isopeptide (Lys-Gly) (interchain with G-Cter in SUMO2). 2 disordered regions span residues 303-343 (GRSQ…AAEE) and 371-420 (IAPP…HSSP). Residues 309–318 (RGKEKEKDGT) show a composition bias toward basic and acidic residues.

The protein belongs to the SLT11 family. As to quaternary structure, component of the pre-catalytic and catalytic spliceosome complexes. Component of the postcatalytic spliceosome P complex. Interacts with PDCD6; the interaction induces translocation of PDCD6 in the cytoplasm. Interacts with PPIL1.

The protein resides in the nucleus. Its subcellular location is the cytoplasm. In terms of biological role, required for pre-mRNA splicing as component of the activated spliceosome. Involved in the first step of pre-mRNA splicing. Binds directly to the internal stem-loop (ISL) domain of the U6 snRNA and to the pre-mRNA intron near the 5' splice site during the activation and catalytic phases of the spliceosome cycle. Involved in both translocations of the nuclear SLU7 to the cytoplasm and the cytosolic calcium-binding protein PDCD6 to the nucleus upon cellular stress responses. The sequence is that of Pre-mRNA-splicing factor RBM22 (Rbm22) from Rattus norvegicus (Rat).